The chain runs to 122 residues: ATP-dependent Clp protease adapter protein ClpS (122 aa).

The protein belongs to the ClpS family. As to quaternary structure, binds to the N-terminal domain of the chaperone ClpA.

Functionally, involved in the modulation of the specificity of the ClpAP-mediated ATP-dependent protein degradation. The chain is ATP-dependent Clp protease adapter protein ClpS from Pseudomonas fluorescens (strain SBW25).